The sequence spans 143 residues: Large ribosomal subunit protein uL15 (143 aa).

Positions 1-52 are disordered; it reads MELNSIQPADGAKHYKRRVGRGIGSGLGKTSGRGHKGQKSRSGGFHKVGFEG. Gly residues predominate over residues 21-31; that stretch reads RGIGSGLGKTS.

This sequence belongs to the universal ribosomal protein uL15 family. In terms of assembly, part of the 50S ribosomal subunit.

Its function is as follows. Binds to the 23S rRNA. This chain is Large ribosomal subunit protein uL15, found in Janthinobacterium sp. (strain Marseille) (Minibacterium massiliensis).